Here is a 162-residue protein sequence, read N- to C-terminus: uncharacterized protein (162 aa).

The protein resides in the cytoplasm. Its subcellular location is the nucleus. This is an uncharacterized protein from Schizosaccharomyces pombe (strain 972 / ATCC 24843) (Fission yeast).